Reading from the N-terminus, the 419-residue chain is S-adenosylmethionine synthase (419 aa).

Histidine 14 is a binding site for ATP. Position 16 (aspartate 16) interacts with Mg(2+). Glutamate 42 contributes to the K(+) binding site. 2 residues coordinate L-methionine: glutamate 55 and glutamine 98. Residues 98 to 108 are flexible loop; that stretch reads QSQDIYQGVDR. Residues 164-166, 242-243, aspartate 251, 257-258, alanine 274, and lysine 278 contribute to the ATP site; these read DSK, KF, and RK. Aspartate 251 serves as a coordination point for L-methionine. Lysine 282 contacts L-methionine.

This sequence belongs to the AdoMet synthase family. As to quaternary structure, homotetramer; dimer of dimers. Mg(2+) serves as cofactor. Requires K(+) as cofactor.

The protein resides in the cytoplasm. The catalysed reaction is L-methionine + ATP + H2O = S-adenosyl-L-methionine + phosphate + diphosphate. It functions in the pathway amino-acid biosynthesis; S-adenosyl-L-methionine biosynthesis; S-adenosyl-L-methionine from L-methionine: step 1/1. In terms of biological role, catalyzes the formation of S-adenosylmethionine (AdoMet) from methionine and ATP. The overall synthetic reaction is composed of two sequential steps, AdoMet formation and the subsequent tripolyphosphate hydrolysis which occurs prior to release of AdoMet from the enzyme. The chain is S-adenosylmethionine synthase from Christiangramia forsetii (strain DSM 17595 / CGMCC 1.15422 / KT0803) (Gramella forsetii).